A 964-amino-acid polypeptide reads, in one-letter code: Iron-responsive element-binding protein 2 (964 aa).

3 residues coordinate [4Fe-4S] cluster: cysteine 513, cysteine 579, and cysteine 582.

It belongs to the aconitase/IPM isomerase family. Interacts with RBCK1 only in iron-rich conditions. Interacts (when associated with the 4Fe-4S) with FBXL5. Interacts with CIAO1 and CIAO2A. It depends on [4Fe-4S] cluster as a cofactor. Post-translationally, ubiquitinated and degraded by the proteasome in presence of high level of iron and oxygen. Ubiquitinated by a SCF complex containing FBXL5. Upon iron and oxygen depletion FBXL5 is degraded, preventing ubiquitination and allowing its RNA-binding activity.

Its subcellular location is the cytoplasm. Its function is as follows. RNA-binding protein that binds to iron-responsive elements (IRES), which are stem-loop structures found in the 5'-UTR of ferritin, and delta aminolevulinic acid synthase mRNAs, and in the 3'-UTR of transferrin receptor mRNA. Binding to the IRE element in ferritin results in the repression of its mRNA translation. Binding of the protein to the transferrin receptor mRNA inhibits the degradation of this otherwise rapidly degraded mRNA. The sequence is that of Iron-responsive element-binding protein 2 (IREB2) from Sus scrofa (Pig).